The sequence spans 190 residues: Elongation factor P (190 aa).

The residue at position 34 (lysine 34) is an N6-(3,6-diaminohexanoyl)-5-hydroxylysine.

This sequence belongs to the elongation factor P family. In terms of processing, may be beta-lysylated on the epsilon-amino group of Lys-34 by the combined action of EpmA and EpmB, and then hydroxylated on the C5 position of the same residue by EpmC (if this protein is present). Lysylation is critical for the stimulatory effect of EF-P on peptide-bond formation. The lysylation moiety may extend toward the peptidyltransferase center and stabilize the terminal 3-CCA end of the tRNA. Hydroxylation of the C5 position on Lys-34 may allow additional potential stabilizing hydrogen-bond interactions with the P-tRNA.

It is found in the cytoplasm. The protein operates within protein biosynthesis; polypeptide chain elongation. Functionally, involved in peptide bond synthesis. Alleviates ribosome stalling that occurs when 3 or more consecutive Pro residues or the sequence PPG is present in a protein, possibly by augmenting the peptidyl transferase activity of the ribosome. Modification of Lys-34 is required for alleviation. The chain is Elongation factor P from Psychrobacter arcticus (strain DSM 17307 / VKM B-2377 / 273-4).